The chain runs to 156 residues: Transcriptional regulator MraZ (156 aa).

SpoVT-AbrB domains follow at residues 7 to 64 (KERH…EPSV) and 93 to 136 (LEMV…EPAR).

It belongs to the MraZ family. As to quaternary structure, forms oligomers.

The protein resides in the cytoplasm. The protein localises to the nucleoid. The chain is Transcriptional regulator MraZ from Chlorobium phaeovibrioides (strain DSM 265 / 1930) (Prosthecochloris vibrioformis (strain DSM 265)).